The following is a 361-amino-acid chain: Transcription factor Sox-18B (361 aa).

A disordered region spans residues 17-65 (VNSTWVPPADTVPEASLTPHSPPAPDSPAPSPKPGYGYSACEEKPGDPR). The segment covering 36–49 (HSPPAPDSPAPSPK) has biased composition (pro residues). Residues 66 to 134 (IRRPMNAFMV…QHLQDHPNYK (69 aa)) constitute a DNA-binding region (HMG box). Interaction with DNA regions lie at residues 68-81 (RPMNAFMVWAKDER) and 92-104 (HNAVLSKMLGQSW). A disordered region spans residues 127–163 (LQDHPNYKYRPRRKKQAKKLKRMDPSHHLRNEGYTGG). A compositionally biased stretch (basic residues) spans 133–147 (YKYRPRRKKQAKKLK). An important for transcriptional activation region spans residues 147 to 208 (KRMDPSHHLR…VLEPSEPAFF (62 aa)). The span at 148–157 (RMDPSHHLRN) shows a compositional bias: basic and acidic residues. One can recognise a Sox C-terminal domain in the interval 234–360 (KTLREISLPY…TAMYYTPCIT (127 aa)). Residues 306 to 314 (NEFDQYLNM) carry the 9aaTAD motif.

As to expression, expressed in the adult spleen, lung, heart and kidney, and at a lower level in the adult testis, liver and brain.

It localises to the nucleus. In terms of biological role, transcription factor. Binds to the consensus DNA sequence 5'-AACAAT-3'. Also binds 5'-CACAAT-3' and 5'-AATAAT-3' but with a lower affinity. Acts partially redundantly with sox7 during cardiogenesis, acting indirectly through nodal-signaling to induce mesodermal, organizer and endodermal tissues, which then interact to initiate cardiogenesis. Also acts as an antagonist of beta-catenin signaling. The sequence is that of Transcription factor Sox-18B (sox18-b) from Xenopus laevis (African clawed frog).